Consider the following 425-residue polypeptide: Histone-binding protein RBBP7 (425 aa).

At Ala2 the chain carries N-acetylalanine. Ser3 carries the phosphoserine modification. Residue Lys4 is modified to N6-acetyllysine; alternate. Residue Lys4 forms a Glycyl lysine isopeptide (Lys-Gly) (interchain with G-Cter in SUMO2); alternate linkage. Lys4 participates in a covalent cross-link: Glycyl lysine isopeptide (Lys-Gly) (interchain with G-Cter in ubiquitin); alternate. Thr10 is subject to Phosphothreonine. Glu13 and Ser95 each carry phosphoserine. WD repeat units follow at residues 47-122, 128-173, 181-217, 228-269, 275-312, 318-369, and 376-403; these read QWLP…KINH, RARY…LRLR, GLSW…KIVD, VVED…HLVD, VNCL…LHTF, EIFQ…LFIH, and ISDF…IWQM. A Glycyl lysine isopeptide (Lys-Gly) (interchain with G-Cter in SUMO2) cross-link involves residue Lys101. Position 119 is an N6-acetyllysine (Lys119). Lys155 is covalently cross-linked (Glycyl lysine isopeptide (Lys-Gly) (interchain with G-Cter in SUMO2)). Position 159 is an N6-acetyllysine; alternate (Lys159). A Glycyl lysine isopeptide (Lys-Gly) (interchain with G-Cter in SUMO2); alternate cross-link involves residue Lys159. Ser354 bears the Phosphoserine mark.

This sequence belongs to the WD repeat RBAP46/RBAP48/MSI1 family. In terms of assembly, binds directly to helix 1 of the histone fold of histone H4, a region that is not accessible when H4 is in chromatin. Subunit of the type B histone acetyltransferase (HAT) complex, composed of RBBP7 and HAT1. Subunit of the core histone deacetylase (HDAC) complex, which is composed of HDAC1, HDAC2, RBBP4 and RBBP7. The core HDAC complex associates with SIN3A, ARID4B/SAP180, SAP18, SAP30, SAP130, SUDS3/SAP45 and possibly ARID4A/RBP1 and ING1 to form the SIN3 HDAC complex. Component of the nucleosome remodeling and deacetylase (NuRD) repressor complex, composed of core proteins MTA1, MTA2, MTA3, RBBP4, RBBP7, HDAC1, HDAC2, MBD2, MBD3, and peripherally associated proteins CDK2AP1, CDK2AP2, GATAD2A, GATAD2B, CHD3, CHD4 and CHD5. The exact stoichiometry of the NuRD complex is unknown, and some subunits such as MBD2 and MBD3, GATAD2A and GATAD2B, and CHD3, CHD4 and CHD5 define mutually exclusive NuRD complexes. The NuRD complex may interact with MBD3L1. The NuRD complex may interact with MBD3L2. Subunit of the PRC2/EED-EZH2 complex, which is composed of at least EED, EZH2, RBBP4, RBBP7 and SUZ12. The PRC2/EED-EZH2 complex may also associate with HDAC1. Component of the NURF-1 ISWI chromatin remodeling complex (also called the nucleosome-remodeling factor (NURF) complex) at least composed of SMARCA1 (isoform 2), BPTF, RBBP4 and RBBP7. Within the complex interacts with isoform 2 of SMARCA1. Component of the BPFT-SMARCA1 complex at least composed of SMARCA1 (isoform 1), BPFT, RBBP4 and RBBP7; the complex is catalytically inactive and does not remodel chromatin. Within the complex interacts with isoform 1 of SMARCA1. Interacts with BRCA1. Interacts with CDK2AP1. Interacts with CENPA. Interacts with CHD3. Interacts with CHD4. Interacts with CREBBP, and this interaction may be enhanced by the binding of phosphorylated CREB1 to CREBBP. Interacts with HDAC7. Interacts with MTA1. Interacts with PWWP2B. Interacts with RB1 (via viral protein-binding domain). Interacts with SUV39H1.

Its subcellular location is the nucleus. Its function is as follows. Core histone-binding subunit that may target chromatin remodeling factors, histone acetyltransferases and histone deacetylases to their histone substrates in a manner that is regulated by nucleosomal DNA. Component of several complexes which regulate chromatin metabolism. These include the type B histone acetyltransferase (HAT) complex, which is required for chromatin assembly following DNA replication; the core histone deacetylase (HDAC) complex, which promotes histone deacetylation and consequent transcriptional repression; the nucleosome remodeling and histone deacetylase complex (the NuRD complex), which promotes transcriptional repression by histone deacetylation and nucleosome remodeling; and the PRC2/EED-EZH2 complex, which promotes repression of homeotic genes during development; and the NURF (nucleosome remodeling factor) complex. The sequence is that of Histone-binding protein RBBP7 (RBBP7) from Homo sapiens (Human).